Here is a 390-residue protein sequence, read N- to C-terminus: Succinyl-diaminopimelate desuccinylase (390 aa).

Zn(2+) is bound at residue His-75. Asp-77 is a catalytic residue. Residue Asp-108 participates in Zn(2+) binding. Glu-141 acts as the Proton acceptor in catalysis. Residues Glu-142, Glu-170, and His-359 each coordinate Zn(2+).

This sequence belongs to the peptidase M20A family. DapE subfamily. As to quaternary structure, homodimer. The cofactor is Zn(2+). It depends on Co(2+) as a cofactor.

The catalysed reaction is N-succinyl-(2S,6S)-2,6-diaminopimelate + H2O = (2S,6S)-2,6-diaminopimelate + succinate. The protein operates within amino-acid biosynthesis; L-lysine biosynthesis via DAP pathway; LL-2,6-diaminopimelate from (S)-tetrahydrodipicolinate (succinylase route): step 3/3. Catalyzes the hydrolysis of N-succinyl-L,L-diaminopimelic acid (SDAP), forming succinate and LL-2,6-diaminopimelate (DAP), an intermediate involved in the bacterial biosynthesis of lysine and meso-diaminopimelic acid, an essential component of bacterial cell walls. This chain is Succinyl-diaminopimelate desuccinylase, found in Maricaulis maris (strain MCS10) (Caulobacter maris).